The sequence spans 138 residues: Brain natriuretic peptide (138 aa).

A signal peptide spans 1 to 22 (MRLSSMWLCSLLLILKLQLSST). Disordered stretches follow at residues 50-84 (EQMAVDQSAPGQRDLLDSLSTEDAGDGPQPDAGLD) and 99-138 (SVRNDSSRRSSGCFGRRMDRIGSMSSLGCNTVGRYNPKQR). A disulfide bridge links C111 with C127.

Belongs to the natriuretic peptide family.

The protein localises to the secreted. Its function is as follows. Cardiac hormone which may function as a paracrine antifibrotic factor in the heart. Also plays a key role in cardiovascular homeostasis through natriuresis, diuresis, vasorelaxation, and inhibition of renin and aldosterone secretion. The protein is Brain natriuretic peptide (nppb) of Oreochromis mossambicus (Mozambique tilapia).